The sequence spans 720 residues: Inactive serine protease PAMR1 (720 aa).

The first 21 residues, 1-21, serve as a signal peptide directing secretion; the sequence is MELGCWTQLGLTFLQLLLISS. Intrachain disulfides connect Cys128–Cys150, Cys177–Cys199, Cys239–Cys250, Cys244–Cys260, Cys262–Cys271, Cys280–Cys329, Cys315–Cys342, Cys414–Cys442, and Cys489–Cys505. Residues 128-236 enclose the CUB domain; it reads CGQVLRAPKG…DGFHAIYEEI (109 aa). Residues 235–272 enclose the EGF-like domain; it reads EITACSSSPCFHDGTCVLDKAGSYKCACLAGYTGQRCE. 2 consecutive Sushi domains span residues 278–344 and 387–444; these read RNCS…ICIK and APTK…SCIP. A Peptidase S1 domain is found at 445–720; the sequence is ICGKIENITA…FKDWIERNMK (276 aa). Residue Asn614 is glycosylated (N-linked (GlcNAc...) asparagine). Intrachain disulfides connect Cys630/Cys649 and Cys661/Cys697.

Belongs to the peptidase S1 family.

The protein resides in the secreted. May play a role in regeneration of skeletal muscle. The chain is Inactive serine protease PAMR1 (PAMR1) from Homo sapiens (Human).